We begin with the raw amino-acid sequence, 344 residues long: Phosphate acyltransferase (344 aa).

Belongs to the PlsX family. As to quaternary structure, homodimer. Probably interacts with PlsY.

It localises to the cytoplasm. The catalysed reaction is a fatty acyl-[ACP] + phosphate = an acyl phosphate + holo-[ACP]. It functions in the pathway lipid metabolism; phospholipid metabolism. Catalyzes the reversible formation of acyl-phosphate (acyl-PO(4)) from acyl-[acyl-carrier-protein] (acyl-ACP). This enzyme utilizes acyl-ACP as fatty acyl donor, but not acyl-CoA. The polypeptide is Phosphate acyltransferase (Sphingopyxis alaskensis (strain DSM 13593 / LMG 18877 / RB2256) (Sphingomonas alaskensis)).